We begin with the raw amino-acid sequence, 309 residues long: Olfactory receptor 4A47 (309 aa).

The Extracellular portion of the chain corresponds to 1–23; it reads MEPRKNVTDFVLLGFTQNPKEQK. Residue asparagine 6 is glycosylated (N-linked (GlcNAc...) asparagine). Residues 24 to 47 form a helical membrane-spanning segment; that stretch reads VLFVMFLLFYILTMVGNLLIVVTV. Residues 48–55 are Cytoplasmic-facing; that stretch reads TVSETLGS. A helical transmembrane segment spans residues 56–77; sequence PMYFFLAGLSFIDIIYSSSISP. At 78–98 the chain is on the extracellular side; it reads RLISGLFFGNNSISFQSCMAQ. Asparagine 87 is a glycosylation site (N-linked (GlcNAc...) asparagine). Cysteine 95 and cysteine 187 are disulfide-bonded. Residues 99–118 form a helical membrane-spanning segment; the sequence is LFIEHIFGGSEVFLLLVMAY. Over 119–137 the chain is Cytoplasmic; sequence DCYVAICKPLHYLVIMRQW. The chain crosses the membrane as a helical span at residues 138 to 156; sequence VCVVLLVVSWVGGFLHSVF. Over 157–193 the chain is Extracellular; it reads QLSIIYGLPFCGPNVIDHFFCDMYPLLKLVCTDTHAI. The helical transmembrane segment at 194–217 threads the bilayer; sequence GLLVVANGGLACTIVFLLLLISYG. The Cytoplasmic portion of the chain corresponds to 218–233; that stretch reads VILHSLKNLSQKGRQK. Residues 234-256 form a helical membrane-spanning segment; that stretch reads ALSTCSSHMTVVVFFFVPCIFMY. Residues 257–267 are Extracellular-facing; the sequence is ARPARTFPIDK. The helical transmembrane segment at 268–287 threads the bilayer; that stretch reads SVSVFYTVITPMLNPLIYTL. The Cytoplasmic portion of the chain corresponds to 288–309; the sequence is RNSEMTSAMKKLWRRDLISSST.

The protein belongs to the G-protein coupled receptor 1 family.

Its subcellular location is the cell membrane. Odorant receptor. This chain is Olfactory receptor 4A47 (OR4A47), found in Homo sapiens (Human).